The following is a 580-amino-acid chain: Protein O-linked-mannose beta-1,4-N-acetylglucosaminyltransferase 2 (580 aa).

The Cytoplasmic portion of the chain corresponds to 1 to 4 (MHLS). A helical; Signal-anchor for type II membrane protein membrane pass occupies residues 5-25 (AVFNALLVSVLAAVLWKHVRL). The Lumenal segment spans residues 26 to 580 (REHAATLEEE…PFADVLVCST (555 aa)). Residues asparagine 99 and asparagine 276 are each glycosylated (N-linked (GlcNAc...) asparagine). The Fibronectin type-III domain maps to 488-580 (ARCQASVQGA…PFADVLVCST (93 aa)).

The protein belongs to the glycosyltransferase 61 family. In terms of tissue distribution, mainly expressed in the central nervous system.

The protein resides in the endoplasmic reticulum membrane. It carries out the reaction 3-O-(alpha-D-mannosyl)-L-threonyl-[protein] + UDP-N-acetyl-alpha-D-glucosamine = 3-O-(N-acetyl-beta-D-glucosaminyl-(1-&gt;4)-alpha-D-mannosyl)-L-threonyl-[protein] + UDP + H(+). It functions in the pathway protein modification; protein glycosylation. Its function is as follows. O-linked mannose beta-1,4-N-acetylglucosaminyltransferase that transfers UDP-N-acetyl-D-glucosamine to the 4-position of the mannose to generate N-acetyl-D-glucosamine-beta-1,4-O-D-mannosylprotein. Involved in the biosynthesis of the phosphorylated O-mannosyl trisaccharide (N-acetylgalactosamine-beta-3-N-acetylglucosamine-beta-4-(phosphate-6-)mannose), a carbohydrate structure present in alpha-dystroglycan (DAG1), which is required for binding laminin G-like domain-containing extracellular proteins with high affinity. The protein is Protein O-linked-mannose beta-1,4-N-acetylglucosaminyltransferase 2 (Pomgnt2) of Mus musculus (Mouse).